The following is a 332-amino-acid chain: 4-hydroxythreonine-4-phosphate dehydrogenase (332 aa).

Positions 136 and 137 each coordinate substrate. The a divalent metal cation site is built by histidine 166, histidine 211, and histidine 266. The substrate site is built by lysine 274, asparagine 283, and arginine 292.

The protein belongs to the PdxA family. As to quaternary structure, homodimer. Zn(2+) is required as a cofactor. Mg(2+) serves as cofactor. The cofactor is Co(2+).

It is found in the cytoplasm. The catalysed reaction is 4-(phosphooxy)-L-threonine + NAD(+) = 3-amino-2-oxopropyl phosphate + CO2 + NADH. The protein operates within cofactor biosynthesis; pyridoxine 5'-phosphate biosynthesis; pyridoxine 5'-phosphate from D-erythrose 4-phosphate: step 4/5. Catalyzes the NAD(P)-dependent oxidation of 4-(phosphooxy)-L-threonine (HTP) into 2-amino-3-oxo-4-(phosphooxy)butyric acid which spontaneously decarboxylates to form 3-amino-2-oxopropyl phosphate (AHAP). The chain is 4-hydroxythreonine-4-phosphate dehydrogenase from Wigglesworthia glossinidia brevipalpis.